The primary structure comprises 64 residues: Large ribosomal subunit protein bL35 (64 aa).

The protein belongs to the bacterial ribosomal protein bL35 family.

The polypeptide is Large ribosomal subunit protein bL35 (Carboxydothermus hydrogenoformans (strain ATCC BAA-161 / DSM 6008 / Z-2901)).